A 96-amino-acid chain; its full sequence is Protein RnfH (96 aa).

Belongs to the UPF0125 (RnfH) family.

The chain is Protein RnfH from Escherichia fergusonii (strain ATCC 35469 / DSM 13698 / CCUG 18766 / IAM 14443 / JCM 21226 / LMG 7866 / NBRC 102419 / NCTC 12128 / CDC 0568-73).